A 132-amino-acid polypeptide reads, in one-letter code: Ig kappa chain V-III region MOPC 321 (132 aa).

Positions 1–20 are cleaved as a signal peptide; it reads METDTLLLWVLLLWVPGSTG. The interval 21–43 is framework-1; the sequence is DIVLTQSPASLAVSLGQRATISC. A disulfide bond links Cys-43 and Cys-112. The tract at residues 44 to 58 is complementarity-determining-1; the sequence is RASKSVNTYGNSFMZ. The segment at 59-73 is framework-2; the sequence is WYZZKPGZPPKLLIY. Positions 74–80 are complementarity-determining-2; sequence RASNLZS. Residues 81 to 112 are framework-3; that stretch reads GIPARFSGSGSRTBFTLTIBPVZABDVATYFC. The complementarity-determining-3 stretch occupies residues 113–121; sequence ZZSBZBPWT. The segment at 122-131 is framework-4; sequence FGSGTKLEIK.

This Mus musculus (Mouse) protein is Ig kappa chain V-III region MOPC 321.